A 90-amino-acid polypeptide reads, in one-letter code: Probable Fe(2+)-trafficking protein (90 aa).

It belongs to the Fe(2+)-trafficking protein family.

Its function is as follows. Could be a mediator in iron transactions between iron acquisition and iron-requiring processes, such as synthesis and/or repair of Fe-S clusters in biosynthetic enzymes. The sequence is that of Probable Fe(2+)-trafficking protein from Polaromonas sp. (strain JS666 / ATCC BAA-500).